Reading from the N-terminus, the 151-residue chain is MEATAPRRRHLLPLLLLLLLLCGECPPVSGCNEKRMLAMLPRCGKTFAEMMKKVEVWKWCNLSEFIVYYESFTNCTEVETNVVGCYWPNPLAQSFITGVHRRHFHNCSVDRQQWQDPPDEILIPLIVVPILLTLAMTGLVVWRSKRAAQVV.

Residues 1–30 (MEATAPRRRHLLPLLLLLLLLCGECPPVSG) form the signal peptide. Residues 31–116 (CNEKRMLAML…CSVDRQQWQD (86 aa)) lie on the Extracellular side of the membrane. 2 disulfide bridges follow: Cys-43–Cys-75 and Cys-60–Cys-107. 2 N-linked (GlcNAc...) asparagine glycosylation sites follow: Asn-61 and Asn-106. A helical transmembrane segment spans residues 117 to 141 (PPDEILIPLIVVPILLTLAMTGLVV). At 142-151 (WRSKRAAQVV) the chain is on the cytoplasmic side.

It belongs to the RAMP family. Heterodimer of CALCRL and RAMP3; interaction induces allosteric modulation of CALCRL function and ligand specificity for adrenomedullin/ADM and intermedin/ADM2. Heterodimer of CALCR and RAMP3; interaction form the receptor complex AMYR3 for amylin/IAPP. Interacts with GPER1.

The protein resides in the cell membrane. Its subcellular location is the membrane. Functionally, accessory protein that interacts with and modulates the function of G-protein coupled receptors including calcitonin gene-related peptide type 1 receptor (CALCRL), calcitonin receptor (CALCR) and G-protein coupled estrogen receptor 1 (GPER1). Required for the transport of CALCRL and GPER1 receptors to the plasma membrane. Plays a role in cardioprotection by reducing cardiac hypertrophy and perivascular fibrosis in a GPER1-dependent manner. Together with CALCRL, form a receptor complex for adrenomedullin/ADM and intermedin/ADM2. Together with CALCR, act as a receptor complex for amylin/IAPP. This chain is Receptor activity-modifying protein 3 (RAMP3), found in Sus scrofa (Pig).